The following is a 334-amino-acid chain: Glyceraldehyde-3-phosphate dehydrogenase (334 aa).

NAD(+) contacts are provided by residues 12–13 and glycine 111; that span reads TI. 140 to 142 is a D-glyceraldehyde 3-phosphate binding site; sequence SCN. Cysteine 141 serves as the catalytic Nucleophile. Residue arginine 167 coordinates NAD(+). 192–193 is a binding site for D-glyceraldehyde 3-phosphate; sequence HG. Glutamine 298 contributes to the NAD(+) binding site.

The protein belongs to the glyceraldehyde-3-phosphate dehydrogenase family. In terms of assembly, homotetramer.

The protein resides in the encapsulin nanocompartment. The enzyme catalyses D-glyceraldehyde 3-phosphate + phosphate + NADP(+) = (2R)-3-phospho-glyceroyl phosphate + NADPH + H(+). It carries out the reaction D-glyceraldehyde 3-phosphate + phosphate + NAD(+) = (2R)-3-phospho-glyceroyl phosphate + NADH + H(+). It functions in the pathway carbohydrate degradation; glycolysis; pyruvate from D-glyceraldehyde 3-phosphate: step 1/5. Its function is as follows. Possible cargo protein of a type 4B encapsulin nanocompartment. Active in the presence of NAD and NADP, prefers NADP. The chain is Glyceraldehyde-3-phosphate dehydrogenase (gap) from Pyrococcus furiosus (strain ATCC 43587 / DSM 3638 / JCM 8422 / Vc1).